The sequence spans 221 residues: Orotidine 5'-phosphate decarboxylase (221 aa).

Residues D12, K34, 60-69 (DFKVADIPNT), S117, 170-180 (PGVGAQGGKAS), G193, and R194 contribute to the substrate site. K62 serves as the catalytic Proton donor.

Belongs to the OMP decarboxylase family. Type 1 subfamily. As to quaternary structure, homodimer.

It carries out the reaction orotidine 5'-phosphate + H(+) = UMP + CO2. Its pathway is pyrimidine metabolism; UMP biosynthesis via de novo pathway; UMP from orotate: step 2/2. In terms of biological role, catalyzes the decarboxylation of orotidine 5'-monophosphate (OMP) to uridine 5'-monophosphate (UMP). The protein is Orotidine 5'-phosphate decarboxylase of Methanosarcina acetivorans (strain ATCC 35395 / DSM 2834 / JCM 12185 / C2A).